The primary structure comprises 187 residues: Large ribosomal subunit protein uL5 (187 aa).

This sequence belongs to the universal ribosomal protein uL5 family. Part of the 50S ribosomal subunit; part of the 5S rRNA/L5/L18/L25 subcomplex. Contacts the 5S rRNA and the P site tRNA. Forms a bridge to the 30S subunit in the 70S ribosome.

Functionally, this is one of the proteins that bind and probably mediate the attachment of the 5S RNA into the large ribosomal subunit, where it forms part of the central protuberance. In the 70S ribosome it contacts protein S13 of the 30S subunit (bridge B1b), connecting the 2 subunits; this bridge is implicated in subunit movement. Contacts the P site tRNA; the 5S rRNA and some of its associated proteins might help stabilize positioning of ribosome-bound tRNAs. This is Large ribosomal subunit protein uL5 from Mycobacterium avium (strain 104).